The primary structure comprises 377 residues: Homoserine O-succinyltransferase (377 aa).

Residues 50–358 (NAILVCHALS…PSTYGHDSFL (309 aa)) enclose the AB hydrolase-1 domain. Serine 156 acts as the Nucleophile in catalysis. Position 226 (arginine 226) interacts with substrate. Catalysis depends on residues aspartate 321 and histidine 354. Aspartate 355 contributes to the substrate binding site.

The protein belongs to the AB hydrolase superfamily. MetX family. As to quaternary structure, homodimer.

It localises to the cytoplasm. It catalyses the reaction L-homoserine + succinyl-CoA = O-succinyl-L-homoserine + CoA. Its pathway is amino-acid biosynthesis; L-methionine biosynthesis via de novo pathway; O-succinyl-L-homoserine from L-homoserine: step 1/1. Its function is as follows. Transfers a succinyl group from succinyl-CoA to L-homoserine, forming succinyl-L-homoserine. The protein is Homoserine O-succinyltransferase of Nitrosomonas eutropha (strain DSM 101675 / C91 / Nm57).